A 340-amino-acid chain; its full sequence is Heat-inducible transcription repressor HrcA (340 aa).

Belongs to the HrcA family.

Negative regulator of class I heat shock genes (grpE-dnaK-dnaJ and groELS operons). Prevents heat-shock induction of these operons. This Chromobacterium violaceum (strain ATCC 12472 / DSM 30191 / JCM 1249 / CCUG 213 / NBRC 12614 / NCIMB 9131 / NCTC 9757 / MK) protein is Heat-inducible transcription repressor HrcA.